Reading from the N-terminus, the 318-residue chain is Small ribosomal subunit biogenesis GTPase RsgA (318 aa).

In terms of domain architecture, CP-type G spans 82–246 (RQDEIRTKSF…LIDSPGFQEF (165 aa)). GTP contacts are provided by residues 132-135 (NKSD) and 186-194 (GPSGAGKST). Residues Cys270, Cys275, His277, and Cys283 each coordinate Zn(2+).

It belongs to the TRAFAC class YlqF/YawG GTPase family. RsgA subfamily. As to quaternary structure, monomer. Associates with 30S ribosomal subunit, binds 16S rRNA. Zn(2+) serves as cofactor.

The protein localises to the cytoplasm. One of several proteins that assist in the late maturation steps of the functional core of the 30S ribosomal subunit. Helps release RbfA from mature subunits. May play a role in the assembly of ribosomal proteins into the subunit. Circularly permuted GTPase that catalyzes slow GTP hydrolysis, GTPase activity is stimulated by the 30S ribosomal subunit. This chain is Small ribosomal subunit biogenesis GTPase RsgA, found in Variovorax paradoxus (strain S110).